The primary structure comprises 294 residues: Transcription repressor OFP14 (294 aa).

Basic residues predominate over residues 49–60 (SFKHRRRSSKTR). 3 disordered regions span residues 49–72 (SFKH…HQDS), 96–129 (DDQE…DDDD), and 141–185 (AVYD…SRST). Basic and acidic residues-rich tracts occupy residues 61-72 (FSKEEPVYHQDS) and 96-117 (DDQE…RESS). Residues 118–128 (SDDSDDDDDDD) are compositionally biased toward acidic residues. The span at 164 to 185 (SSEGRPSMETTSTSSERQSRST) shows a compositional bias: low complexity. The OVATE domain occupies 195–259 (VLRYTDEPQE…LSAFVDLIIA (65 aa)).

In terms of assembly, interacts with KNAT2 and KNAT3. Expressed in roots, rosette and cauline leaves, shoots, stems, flower buds and siliques.

The protein localises to the nucleus. Functionally, transcriptional repressor that may regulate multiple aspects of plant growth and development through the regulation of BEL1-LIKE (BLH) and KNOX TALE (KNAT) homeodomain transcription factors. In Arabidopsis thaliana (Mouse-ear cress), this protein is Transcription repressor OFP14 (OFP14).